Reading from the N-terminus, the 150-residue chain is UPF0260 protein PP_4587 (150 aa).

It belongs to the UPF0260 family.

The protein is UPF0260 protein PP_4587 of Pseudomonas putida (strain ATCC 47054 / DSM 6125 / CFBP 8728 / NCIMB 11950 / KT2440).